The primary structure comprises 530 residues: MLDFLAANPLIALAVILAVGLAIGRISLFGVSLGAAAVLIVALVVSTLNPDIQIPAFVFQLGLAMFVYVIGISAGPAFFREFRSRGWKLTLFMITLLVSLTALAWVLIRAFGLGAGAGAGMFAGSLTSTPGMAAVVALMDPAQAGDPVIGYSLAYPGAVLGSILVAAVGAKLLKVNHTEDAREEGLVTEPLVWKGVRIGEGISGTIGDLPRLSGQQIIATRIVEDPHEHRLADPTLPIKPGMELVINGTVNAVDRAIAALGGECDTKIEDTELVYSRFTVSNPDIVGRTVAELDPVANGFMIARIRQGDTEIVPHRDTVLNYSDRVRVVAAPGRMGEVRRFLGDSEKALGDVNLLPFAIGLSLGLLLGAIPVPLPGDTTMYLGFGGGPIVAGLILGALNRTGPITWQLPFHANRTISTLGLALFLAGVGTSAGAGFRQALTDPQSFVYMGVGFAITVTSALVCAVVGMWLLKLKWDESMGVAAGATTNPAIISYLNDQTGTDLANRGYATVYPTAMIGKILACQVLFLLL.

5 helical membrane-spanning segments follow: residues 4–23 (FLAA…GLAI), 28–47 (LFGV…VVST), 57–79 (FVFQ…PAFF), 91–113 (LFMI…AFGL), and 148–170 (VIGY…AVGA). An RCK C-terminal domain is found at 260–344 (LGGECDTKIE…MGEVRRFLGD (85 aa)). The next 4 membrane-spanning stretches (helical) occupy residues 352-374 (VNLL…PVPL), 379-398 (TMYL…LGAL), 419-441 (LGLA…QALT), and 451-473 (VGFA…LLKL).

It belongs to the AAE transporter (TC 2.A.81) family.

The protein resides in the cell membrane. This is an uncharacterized protein from Corynebacterium efficiens (strain DSM 44549 / YS-314 / AJ 12310 / JCM 11189 / NBRC 100395).